The primary structure comprises 695 residues: Rho-related BTB domain-containing protein 1 (695 aa).

The segment at 1 to 210 is rho-like; sequence MDSDMDYERP…DNAIRAALIS (210 aa). GTP is bound by residues 21–28, 84–88, and 140–143; these read GDNAVGKT, DTFGD, and CQLD. BTB domains are found at residues 266-426 and 484-551; these read ADVL…DEKE and SDVT…SPNL. A disordered region spans residues 325 to 351; it reads SLGSAEEGKEGPQRTPQADPGASSGQD.

It belongs to the small GTPase superfamily. Rho family. As to expression, highest expression in heart and testis.

The protein is Rho-related BTB domain-containing protein 1 (Rhobtb1) of Mus musculus (Mouse).